A 332-amino-acid polypeptide reads, in one-letter code: Phospho-N-acetylmuramoyl-pentapeptide-transferase (332 aa).

10 consecutive transmembrane segments (helical) span residues 3–23 (FALMSGLVAFLATVLLIPRFI), 52–72 (MGGTVFLVVAILVSLLFATAF), 74–94 (LLTGGVLAILFILALYGVVGF), 115–135 (LALQILGGIVFYFVHVRGAGG), 140–160 (VFGHMVHLGVLYFPFVLFWLV), 172–192 (IDGLASISVVISLLAYSVIAF), 197–217 (FDILLVCVTMIGGLLGFFVYN), 223–243 (IFMGDVGSLALGGMLATISIA), 248–268 (WTLLLIGLVYVIETSSVMLQV), and 311–331 (VDFFLWSVGLIMSLITLAILY).

This sequence belongs to the glycosyltransferase 4 family. MraY subfamily. Mg(2+) serves as cofactor.

It is found in the cell membrane. The enzyme catalyses UDP-N-acetyl-alpha-D-muramoyl-L-alanyl-gamma-D-glutamyl-L-lysyl-D-alanyl-D-alanine + di-trans,octa-cis-undecaprenyl phosphate = Mur2Ac(oyl-L-Ala-gamma-D-Glu-L-Lys-D-Ala-D-Ala)-di-trans,octa-cis-undecaprenyl diphosphate + UMP. The protein operates within cell wall biogenesis; peptidoglycan biosynthesis. In terms of biological role, catalyzes the initial step of the lipid cycle reactions in the biosynthesis of the cell wall peptidoglycan: transfers peptidoglycan precursor phospho-MurNAc-pentapeptide from UDP-MurNAc-pentapeptide onto the lipid carrier undecaprenyl phosphate, yielding undecaprenyl-pyrophosphoryl-MurNAc-pentapeptide, known as lipid I. This is Phospho-N-acetylmuramoyl-pentapeptide-transferase from Streptococcus suis (strain 98HAH33).